Here is a 29-residue protein sequence, read N- to C-terminus: Snaclec multactivase regulatory subunit (29 aa).

The region spanning D1–C29 is the C-type lectin domain. Residues C2 and C13 are joined by a disulfide bond.

Belongs to the snaclec family. In terms of assembly, heterodimer of a metalloproteinase subunit and a regulatory subunit comprising two homologous polypeptides disulfide-linked. As to expression, expressed by the venom gland.

Its subcellular location is the secreted. Functionally, multactivase, a carinactivase-like calcium-dependent prothrombin activator, activates prothrombin via recognition of the calcium ion bound conformation of its gamma-carboxyglutamic acid (GLA) domain, and the subsequent conversion of prothrombin to active thrombin is catalyzed by the catalytic subunit. This is Snaclec multactivase regulatory subunit from Echis multisquamatus (Central Asian sand viper).